Here is a 275-residue protein sequence, read N- to C-terminus: Probable ribosomal RNA small subunit methyltransferase A (275 aa).

S-adenosyl-L-methionine is bound by residues L13, G38, E59, D84, and N101.

This sequence belongs to the class I-like SAM-binding methyltransferase superfamily. rRNA adenine N(6)-methyltransferase family. RsmA subfamily.

The protein resides in the cytoplasm. Its function is as follows. Specifically dimethylates two adjacent adenosines in the loop of a conserved hairpin near the 3'-end of 16S rRNA in the 30S particle. May play a critical role in biogenesis of 30S subunits. This is Probable ribosomal RNA small subunit methyltransferase A from Methanocaldococcus jannaschii (strain ATCC 43067 / DSM 2661 / JAL-1 / JCM 10045 / NBRC 100440) (Methanococcus jannaschii).